A 589-amino-acid polypeptide reads, in one-letter code: MILQPSSSKSKLTSHQDHHLVPHSISLRRLLSRLDKSELVSLVTRWLDNAGPSYIPPMLSRRQPKAGQEDSVTNLTLYHAILDLNEERRCRSMDELRLLWTGPMSDPRVPKARALDRISDVDWPEGLSYAMVAELDLFYAHARQLSKTWSTVKLEYDDDVDAAGRGWERLSETQIRLRLGNELGHYFEHHIYLHPRVKPEDRNAAAVRSWTDSFSYFRIVLAPIPSDVCGTGLHILHLPRTPFLLVSGSLGRGSENREMALSAFAAAAGATTVNYAKPAAGSAAAKKLLAELNDAGEDAAGNRRTLGELRGKDPLALREILLHESGRLSSTSDASAAPAGVAGGGKARQMQFSQGGSGQGAEDGPLIAPLKRRREEDLSLLGIRPPTPPASGSERDTVSLSSASTSARPTQRRSSLTPCSQTPQETHQHAREALTTRMESQREANELFGPKPNPYDPSNDALPRVERIEYELHLPFPAMQRYNTRSLIDMDAYNSDPEKPKIKLRLEGTHVLAGLRKLVAAGMDRSTSRLDAGEGQGDDDDEEDGQAEKYEGAVKPVKLDGLPGWLTEVRGTKVVVQPSPPGDDSSRDM.

4 disordered regions span residues 328–365, 379–459, 525–555, and 569–589; these read LSST…EDGP, SLLG…DPSN, RSTS…GAVK, and VRGT…SRDM. Polar residues predominate over residues 398-425; it reads VSLSSASTSARPTQRRSSLTPCSQTPQE. The span at 426 to 445 shows a compositional bias: basic and acidic residues; it reads THQHAREALTTRMESQREAN. The segment covering 536-545 has biased composition (acidic residues); sequence QGDDDDEEDG.

This is an uncharacterized protein from Mycosarcoma maydis (Corn smut fungus).